We begin with the raw amino-acid sequence, 168 residues long: Photosystem I assembly protein Ycf3 (168 aa).

TPR repeat units follow at residues 35–68 (AFTYYRDGMSAQSEGNYAEALQNYYEATRLEIDP), 72–105 (SYILYNIGLIHTSNGEHTKALEYYFRALERNPFL), and 120–153 (GEQAIRQGDSEIAEAWSDQAAEYWKQAISLTPGN).

It belongs to the Ycf3 family.

The protein localises to the plastid. Its subcellular location is the chloroplast thylakoid membrane. Its function is as follows. Essential for the assembly of the photosystem I (PSI) complex. May act as a chaperone-like factor to guide the assembly of the PSI subunits. The sequence is that of Photosystem I assembly protein Ycf3 from Piper cenocladum (Ant piper).